Consider the following 312-residue polypeptide: tRNA pseudouridine synthase B (312 aa).

Aspartate 46 serves as the catalytic Nucleophile. Substrate is bound by residues tyrosine 74, tyrosine 177, and leucine 198.

The protein belongs to the pseudouridine synthase TruB family. Type 1 subfamily.

The catalysed reaction is uridine(55) in tRNA = pseudouridine(55) in tRNA. Its function is as follows. Responsible for synthesis of pseudouridine from uracil-55 in the psi GC loop of transfer RNAs. This chain is tRNA pseudouridine synthase B, found in Buchnera aphidicola subsp. Schizaphis graminum (strain Sg).